Reading from the N-terminus, the 361-residue chain is UDP-N-acetylglucosamine--N-acetylmuramyl-(pentapeptide) pyrophosphoryl-undecaprenol N-acetylglucosamine transferase (361 aa).

UDP-N-acetyl-alpha-D-glucosamine-binding positions include 21–23 (TGG), Asn-131, Arg-172, Ser-195, Ile-250, and Gln-295.

Belongs to the glycosyltransferase 28 family. MurG subfamily.

Its subcellular location is the cell inner membrane. It catalyses the reaction di-trans,octa-cis-undecaprenyl diphospho-N-acetyl-alpha-D-muramoyl-L-alanyl-D-glutamyl-meso-2,6-diaminopimeloyl-D-alanyl-D-alanine + UDP-N-acetyl-alpha-D-glucosamine = di-trans,octa-cis-undecaprenyl diphospho-[N-acetyl-alpha-D-glucosaminyl-(1-&gt;4)]-N-acetyl-alpha-D-muramoyl-L-alanyl-D-glutamyl-meso-2,6-diaminopimeloyl-D-alanyl-D-alanine + UDP + H(+). It participates in cell wall biogenesis; peptidoglycan biosynthesis. In terms of biological role, cell wall formation. Catalyzes the transfer of a GlcNAc subunit on undecaprenyl-pyrophosphoryl-MurNAc-pentapeptide (lipid intermediate I) to form undecaprenyl-pyrophosphoryl-MurNAc-(pentapeptide)GlcNAc (lipid intermediate II). In Solibacter usitatus (strain Ellin6076), this protein is UDP-N-acetylglucosamine--N-acetylmuramyl-(pentapeptide) pyrophosphoryl-undecaprenol N-acetylglucosamine transferase.